The primary structure comprises 63 residues: Cecropin-C (63 aa).

Residues 1–23 (MNFYKIFVFVALILAISIGQSEA) form the signal peptide. An Arginine amide modification is found at Arg-62.

The protein belongs to the cecropin family.

It is found in the secreted. In terms of biological role, cecropins have lytic and antibacterial activity against several Gram-positive and Gram-negative bacteria. The polypeptide is Cecropin-C (CecC) (Drosophila mauritiana (Fruit fly)).